Consider the following 316-residue polypeptide: BTB/POZ domain-containing protein Y57A10B.3 (316 aa).

A signal peptide spans 1-21 (MSAMRRCTCFIICLLTSYTYG). N-linked (GlcNAc...) asparagine glycosylation is found at Asn-91, Asn-107, Asn-118, Asn-133, Asn-191, and Asn-260. Residues 158-226 (RDAVLIVEGK…VHSTATFPND (69 aa)) enclose the BTB domain.

The protein localises to the secreted. The protein is BTB/POZ domain-containing protein Y57A10B.3 (btb-14) of Caenorhabditis elegans.